The following is a 3096-amino-acid chain: Unconventional myosin-XVB (3096 aa).

Disordered stretches follow at residues 1–330 (MGRN…GPED), 389–489 (RPPE…GWGR), 508–540 (GGMP…ETPD), and 553–649 (AGRA…GPRL). Low complexity predominate over residues 19–33 (ASGEQESGSASADGA). Positions 34 to 50 (PSRERRSDRGQADRAKP) are enriched in basic and acidic residues. Residues 124–143 (RRRRKRKDKGPSARRGRRTP) show a composition bias toward basic residues. Composition is skewed to basic and acidic residues over residues 212 to 222 (DWPHADTRGRE) and 261 to 288 (TFED…RGAE). A compositionally biased stretch (low complexity) spans 307–330 (AVGQVPAAAGEGEAGAAAGAGPED). Residues 406–416 (WGRRKPDEGRG) show a composition bias toward basic and acidic residues. The span at 417 to 426 (HGRGSKGRGR) shows a compositional bias: basic residues. Over residues 427–489 (GKADEGRGHE…HQRGYEGWGR (63 aa)) the composition is skewed to basic and acidic residues. Residues 720-1394 (EDMEDLARLR…GWQRLEELRD (675 aa)) form the Myosin motor domain. ATP is bound at residue 818-825 (GHSGSGKT). The interval 1273 to 1295 (LEDLIARLGRSHVYFIQCLTPNP) is actin-binding. Residues 1414-1443 (RQRVLPRMQARMRGFQARKRYLRRRAALGQ) enclose the IQ domain. The MyTH4 1 domain maps to 1551 to 1702 (RPGQPLAKPL…PTQLEWLAGW (152 aa)). Disordered stretches follow at residues 1802–1833 (PGIQ…VQRS), 1963–2026 (MQQR…PKSF), and 2040–2262 (QITV…LPED). The segment covering 1808 to 1820 (SLPPGPPPGPAPT) has biased composition (pro residues). The segment covering 1963 to 1980 (MQQRQQQARASEAASQAS) has biased composition (low complexity). Residues 2059–2076 (AQEEEEEEEEEEEQEEQE) show a composition bias toward acidic residues. Over residues 2102-2116 (APKEAEAEPAKETAA) the composition is skewed to basic and acidic residues. Over residues 2159-2170 (GPVPVPVQPSRP) the composition is skewed to pro residues. Residues 2176–2185 (RKIDPKDEAL) are compositionally biased toward basic and acidic residues. 2 stretches are compositionally biased toward pro residues: residues 2199-2217 (MLSP…PRPK) and 2247-2261 (HTPP…PLPE). The SH3 domain occupies 2481–2542 (KDSGYVIALR…PADIVQPAAA (62 aa)). The tract at residues 2548–2567 (SKEQRSGWHKGQLSNGEPGL) is disordered. The region spanning 2643–2789 (YTKAPIQESL…PPPGEMKAFL (147 aa)) is the MyTH4 2 domain. The 302-residue stretch at 2795–3096 (RLLLIHLPGG…ASCTEWPSIN (302 aa)) folds into the FERM domain.

It belongs to the TRAFAC class myosin-kinesin ATPase superfamily. Myosin family. As to expression, detected in brain, stomach and kidney.

Its subcellular location is the cytoplasm. The polypeptide is Unconventional myosin-XVB (Homo sapiens (Human)).